A 293-amino-acid chain; its full sequence is Acetylglutamate kinase (293 aa).

Residues 68–69 (GG), R90, and N189 contribute to the substrate site.

The protein belongs to the acetylglutamate kinase family. ArgB subfamily.

The protein localises to the cytoplasm. It catalyses the reaction N-acetyl-L-glutamate + ATP = N-acetyl-L-glutamyl 5-phosphate + ADP. It participates in amino-acid biosynthesis; L-arginine biosynthesis; N(2)-acetyl-L-ornithine from L-glutamate: step 2/4. Functionally, catalyzes the ATP-dependent phosphorylation of N-acetyl-L-glutamate. The polypeptide is Acetylglutamate kinase (Caldicellulosiruptor bescii (strain ATCC BAA-1888 / DSM 6725 / KCTC 15123 / Z-1320) (Anaerocellum thermophilum)).